We begin with the raw amino-acid sequence, 159 residues long: 6,7-dimethyl-8-ribityllumazine synthase (159 aa).

5-amino-6-(D-ribitylamino)uracil contacts are provided by residues Tyr23, 58 to 60 (AYE), and 82 to 84 (TII). His90 functions as the Proton donor in the catalytic mechanism. Ile115 is a 5-amino-6-(D-ribitylamino)uracil binding site. Arg129 is a binding site for (2S)-2-hydroxy-3-oxobutyl phosphate.

Belongs to the DMRL synthase family. Forms an icosahedral capsid composed of 60 subunits, arranged as a dodecamer of pentamers.

The enzyme catalyses (2S)-2-hydroxy-3-oxobutyl phosphate + 5-amino-6-(D-ribitylamino)uracil = 6,7-dimethyl-8-(1-D-ribityl)lumazine + phosphate + 2 H2O + H(+). It functions in the pathway cofactor biosynthesis; riboflavin biosynthesis; riboflavin from 2-hydroxy-3-oxobutyl phosphate and 5-amino-6-(D-ribitylamino)uracil: step 1/2. In terms of biological role, catalyzes the formation of 6,7-dimethyl-8-ribityllumazine by condensation of 5-amino-6-(D-ribitylamino)uracil with 3,4-dihydroxy-2-butanone 4-phosphate. This is the penultimate step in the biosynthesis of riboflavin. The chain is 6,7-dimethyl-8-ribityllumazine synthase from Buchnera aphidicola subsp. Baizongia pistaciae (strain Bp).